We begin with the raw amino-acid sequence, 206 residues long: Small ribosomal subunit protein uS4 (206 aa).

Positions 96-156 constitute an S4 RNA-binding domain; that stretch reads SRLDNIVYRL…KKSKNQLRIK (61 aa).

The protein belongs to the universal ribosomal protein uS4 family. Part of the 30S ribosomal subunit. Contacts protein S5. The interaction surface between S4 and S5 is involved in control of translational fidelity.

One of the primary rRNA binding proteins, it binds directly to 16S rRNA where it nucleates assembly of the body of the 30S subunit. In terms of biological role, with S5 and S12 plays an important role in translational accuracy. The sequence is that of Small ribosomal subunit protein uS4 from Buchnera aphidicola subsp. Cinara cedri (strain Cc).